Here is a 349-residue protein sequence, read N- to C-terminus: Cyclic amide hydrolase (349 aa).

The tract at residues 1–90 is RU A; sequence MTSPEDTAGV…AVFVDDPASS (90 aa). Residue arginine 38 coordinates substrate. The RU B stretch occupies residues 99–231; the sequence is GLSIGVTTTA…AAVLVMGNSP (133 aa). Lysine 149 is an active-site residue. Substrate contacts are provided by residues arginine 176, 214-215, lysine 311, and 330-331; these read SA and SG. Serine 214 functions as the Nucleophile in the catalytic mechanism. Residues 237 to 349 are RU C; that stretch reads YRIGHGVLRD…GGGTVAVIAR (113 aa).

Belongs to the cyclic amide hydrolase (CyAH) family. As to quaternary structure, homotetramer.

Functionally, cyclic amide hydrolase of unknown substrate specificity. Catalyzes the hydrolytic ring-opening of a cyclic amide. Does not act on cyanuric acid nor barbituric acid. The sequence is that of Cyclic amide hydrolase from Rhodococcus sp.